The sequence spans 111 residues: ATP-dependent Clp protease adapter protein ClpS (111 aa).

It belongs to the ClpS family. In terms of assembly, binds to the N-terminal domain of the chaperone ClpA.

Its function is as follows. Involved in the modulation of the specificity of the ClpAP-mediated ATP-dependent protein degradation. This Corynebacterium aurimucosum (strain ATCC 700975 / DSM 44827 / CIP 107346 / CN-1) (Corynebacterium nigricans) protein is ATP-dependent Clp protease adapter protein ClpS.